The chain runs to 695 residues: MSTLDRSIQARARAHLFGLLRAGFRAIPLSDATRDRWRSWFLDRHADWVPEPVRGRANHAISRRPTARSDEAAIGHVAYRTTALPETLPATLVAFYLPQFHPIPENDAWWGKGFTEWRNVSRTLPQFEGHQQPRLPADLGFYDLRTPDVMREQARLAQEYGLGAFCFYFYWFAGKTLLEMPITQWHADTSITLPFCLCWANEKWARRWDGRGHDVLIDQAHSADDDLAFIAHVARYMRNPKYLRVGDRPLLLVYRPHLLPEPVQTAARWRNWCRDNGIGEIHLAYVQGFERPDPRDIGFDAAVEFPPNMSTPPSVTARQRLVNPDFSGDVFDWRELARDMEQRPLRDYTLYPGVNPGWDNEPRRSGKGRIYLHASPRRYRDWLARTVQHRLANAPSAHRMVFINAWNEWAEGAVLEPDARLGYAWLDATRQALTRAPDVATEICSPSACVVLHAWYLDVLDEMLDAIVECGTPLRIIITTDLTKVIEVTKCIQRRGIQAEVEGFENRGRDILPFLHVANRLLDENVQLVLKLHTKKSTHRDDGNAWRGEMLTALLGPQRVDAIVNAFSTDPLVGLAAPEDHLLPVTEFIGGNADALDYLTVRTGSDAPDTNSLFASGSMFWARLEALRPLLDAHLHASEFESEQGQIDGTLAHAIERFVGLAVTHSGHRVTTVEQTLGITKTPSAQPYRYARKAP.

This is an uncharacterized protein from Xanthomonas campestris pv. campestris (strain B100).